Reading from the N-terminus, the 365-residue chain is NAC domain-containing protein 37 (365 aa).

The 150-residue stretch at Val-9–Lys-158 folds into the NAC domain. A DNA-binding region spans residues Ile-109 to Ala-164.

This sequence belongs to the plant vascular related NAC-domain protein family. As to quaternary structure, interacts with NAC030/VND7. Expressed in root metaxylem pole and in shoot pre-procambium and procambium. Present in root developing xylems. Specifically expressed in vessels but not in interfascicular fibers in stems.

It is found in the nucleus. In terms of biological role, transcription activator that binds to the secondary wall NAC binding element (SNBE), 5'-(T/A)NN(C/T)(T/C/G)TNNNNNNNA(A/C)GN(A/C/T)(A/T)-3', in the promoter of target genes. Involved in xylem formation by promoting the expression of secondary wall-associated transcription factors and of genes involved in secondary wall biosynthesis and programmed cell death, genes driven by the secondary wall NAC binding element (SNBE). Triggers thickening of secondary walls. In Arabidopsis thaliana (Mouse-ear cress), this protein is NAC domain-containing protein 37.